Here is a 447-residue protein sequence, read N- to C-terminus: MGWIPCPCWGTNDDENAGEVADRDPVLLVSGIGGSILHSKKKNSKSEIRVWVRIFLANLAFKQSLWSLYNPKTGYTEPLDDNIEVLVPDDDHGLYAIDILDPSWFVKLCHLTEVYHFHDMIEMLVGCGYKKGTTLFGYGYDFRQSNRIDLLILGLKKKLETAYKRSGGRKVTIISHSMGGLMVSCFMYLHPEAFSKYVNKWITIATPFQGAPGCINDSILTGVQFVEGLESFFFVSRWTMHQLLVECPSIYEMMANPDFKWKKQPEIRVWRKKSENDVDTSVELESFGLIESIDLFNDALKNNELSYGGNKIALPFNFAILDWAAKTREILNKAQLPDGVSFYNIYGVSLNTPFDVCYGTETSPIDDLSEICQTMPEYTYVDGDGTVPAESAAAAQFKAVASVGVSGSHRGLLRDERVFELIQQWLGVEPKKAKRKHLRTHKVVDSG.

Ser177 acts as the Acyl-ester intermediate in catalysis. Active-site charge relay system residues include Asp384 and His409.

This sequence belongs to the AB hydrolase superfamily. Lipase family.

It is found in the microsome membrane. The catalysed reaction is a 1,2-diacyl-sn-glycero-3-phosphocholine + H2O = a 2-acyl-sn-glycero-3-phosphocholine + a fatty acid + H(+). Its function is as follows. Hydrolyzes the sn-1 acylester bond of phospholipids. Phosphatidylcholine, phosphatidylethanolamine and phosphatidic acid can be used as substrates. Weak activity with lysophosphatidylcholine and no activity with tripalmitoylglycerol and cholesteryl oleate. Seems to have a preference for unsaturated fatty acids at the sn-1 position. This Arabidopsis thaliana (Mouse-ear cress) protein is Phospholipase A(1) LCAT3 (LCAT3).